We begin with the raw amino-acid sequence, 532 residues long: Omega-hydroxyceramide transacylase (532 aa).

The PNPLA domain maps to 16-185 (ISFSGSGFLS…TGMQPCAFWT (170 aa)). The GXSXG signature appears at 51–55 (GTSAG). Ser53 (nucleophile) is an active-site residue. Catalysis depends on Asp172, which acts as the Proton acceptor. The DGA/G motif lies at 172–174 (DGG). Disordered regions lie at residues 290-457 (PERS…ELGQ) and 489-532 (VTES…SKVQ). Over residues 310-322 (PHKEWVPKGDGRG) the composition is skewed to basic and acidic residues. 2 stretches are compositionally biased toward low complexity: residues 380–389 (PPSSTPGSSL) and 397–411 (SPLSPQQQVQPSGSP). A compositionally biased stretch (basic residues) spans 517-532 (GFPRHSGSKKPSSKVQ).

Expressed in the digestive system. Expressed in the epidermis of skin keratinocytes. Strongly expressed in the granular layer. Expressed in the upper epidermis and eccrine sweat glands of the dermis and in the region of keratin filament bundles, which is more pronounced in upper epidermal layers and in the lower cornified layers.

The protein localises to the cytoplasm. The catalysed reaction is an N-(omega-hydroxy-ultra-long chain fatty acyl)-sphingoid base + a (9Z,12Z)-octadecadienoyl-containing triacyl-sn-glycerol = an N-[omega-(9Z,12Z-octadecadienoyloxy)-O-ultra-long chain fatty acyl]-sphingoid base + a diacylglycerol. The enzyme catalyses an N-(omega-hydroxy-ultra-long chain fatty acyl)-sphing-4-enine + a (9Z,12Z)-octadecadienoyl-containing triacyl-sn-glycerol = an N-(omega-(9Z,12Z-octadecadienoyloxy)-ultra-long chain fatty acyl)-sphing-4-enine + a diacylglycerol. It carries out the reaction N-(30-hydroxytriacontanoyl)-sphing-4-enine + 1,2,3-tri-(9Z,12Z)-octadecadienoylglycerol = N-[30-(9Z,12Z-octadecadienoyloxy)-triacontanoyl]-sphing-4-enine + di-(9Z,12Z)-octadecadienoylglycerol. It catalyses the reaction N-(28-hydroxyoctacosanoyl)-sphing-4-enine + a (9Z,12Z)-octadecadienoyl-containing triacyl-sn-glycerol = N-(28-(9Z,12Z-octadecadienoyloxy)-octacosanoyl)-sphing-4-enine + a diacylglycerol. The catalysed reaction is N-(32-hydroxydotriacontanoyl)-sphing-4-enine + a (9Z,12Z)-octadecadienoyl-containing triacyl-sn-glycerol = N-(32-(9Z,12Z-octadecadienoyloxy)-dotricontanoyl)-sphing-4-enine + a diacylglycerol. The enzyme catalyses N-(32-hydroxydotriacontenoyl)-sphing-4-enine + a (9Z,12Z)-octadecadienoyl-containing triacyl-sn-glycerol = an N-(32-(9Z,12Z-octadecadienoyloxy)-dotriacontenoyl)-sphing-4-enine + a diacylglycerol. It carries out the reaction an N-(34-hydroxytetratriacontenoyl)-sphing-4-enine + a (9Z,12Z)-octadecadienoyl-containing triacyl-sn-glycerol = an N-(34-(9Z,12Z-octadecadienoyloxy)-tetratriacontenoyl)-sphing-4-enine + a diacylglycerol. It catalyses the reaction an N-(34-hydroxytetratriacontadienoyl)-sphing-4-enine + a (9Z,12Z)-octadecadienoyl-containing triacyl-sn-glycerol = an N-(34-(9Z,12Z-octadecadienoyloxy)-tetratriacontadienoyl)-sphing-4-enine + a diacylglycerol. The catalysed reaction is an N-(36-hydroxyhexatriacontenoyl)-sphing-4-enine + a (9Z,12Z)-octadecadienoyl-containing triacyl-sn-glycerol = an N-(36-(9Z,12Z-octadecadienoyloxy)-hexatriacontenoyl)-sphing-4-enine + a diacylglycerol. The enzyme catalyses an N-(36-hydroxyhexatriacontadienoyl)-sphing-4-enine + a (9Z,12Z)-octadecadienoyl-containing triacyl-sn-glycerol = an N-(36-(9Z,12Z-octadecadienoyloxy)-hexatriacontadienoyl)-sphing-4-enine + a diacylglycerol. It carries out the reaction an N-(38-hydroxyoctatriacontenoyl)-sphing-4-enine + a (9Z,12Z)-octadecadienoyl-containing triacyl-sn-glycerol = an N-(38-(9Z,12Z-octadecadienoyloxy)-octatriacontenoyl)-sphing-4-enine + a diacylglycerol. Omega-hydroxyceramide transacylase involved in the synthesis of omega-O-acylceramides (esterified omega-hydroxyacyl-sphingosine; EOS), which are extremely hydrophobic lipids involved in skin barrier formation. Catalyzes the last step of the synthesis of omega-O-acylceramides by transferring linoleic acid from triglycerides to an omega-hydroxyceramide. Omega-O-acylceramides, are required for the biogenesis of lipid lamellae in the stratum corneum and the formation of the cornified lipid envelope which are essential for the epidermis barrier function. These lipids also play a role in keratinocyte differentiation. May also act on omega-hydroxylated ultra-long chain fatty acids (omega-OH ULCFA) and acylglucosylceramides (GlcEOS). This is Omega-hydroxyceramide transacylase from Homo sapiens (Human).